The sequence spans 234 residues: Leucyl/phenylalanyl-tRNA--protein transferase (234 aa).

This sequence belongs to the L/F-transferase family.

It is found in the cytoplasm. It catalyses the reaction N-terminal L-lysyl-[protein] + L-leucyl-tRNA(Leu) = N-terminal L-leucyl-L-lysyl-[protein] + tRNA(Leu) + H(+). The catalysed reaction is N-terminal L-arginyl-[protein] + L-leucyl-tRNA(Leu) = N-terminal L-leucyl-L-arginyl-[protein] + tRNA(Leu) + H(+). The enzyme catalyses L-phenylalanyl-tRNA(Phe) + an N-terminal L-alpha-aminoacyl-[protein] = an N-terminal L-phenylalanyl-L-alpha-aminoacyl-[protein] + tRNA(Phe). In terms of biological role, functions in the N-end rule pathway of protein degradation where it conjugates Leu, Phe and, less efficiently, Met from aminoacyl-tRNAs to the N-termini of proteins containing an N-terminal arginine or lysine. The sequence is that of Leucyl/phenylalanyl-tRNA--protein transferase from Nitrosomonas eutropha (strain DSM 101675 / C91 / Nm57).